The following is a 209-amino-acid chain: MESMDAKIVLLGAQGVGKTCFVTRYVNNKFQAGQASTIGASFSRKRVVVNDTTVRLQIWDTAGQERFRSMAPIYYRSASCGILCYDVTSRASFDAMHLWLLELKQNLSSDIIIHIVGTKVDLVKDEPSLREVPFEQCVEYASEWLQDDSCCHEISAKDDEGVEEVFEVIITKLLDKREADEQQKHNSQRQRQSVVYLHTDEDEQKSSCC.

12–19 (GAQGVGKT) serves as a coordination point for GTP. The Effector region motif lies at 34 to 42 (QASTIGASF). Residues 60 to 64 (DTAGQ) and 118 to 121 (TKVD) contribute to the GTP site. S-geranylgeranyl cysteine attachment occurs at residues C208 and C209.

It belongs to the small GTPase superfamily. Rab family.

The protein localises to the cell membrane. Protein transport. Probably involved in vesicular traffic. This is Ras-like GTP-binding protein RYL2 (RYL2) from Yarrowia lipolytica (strain CLIB 122 / E 150) (Yeast).